An 89-amino-acid chain; its full sequence is Small ribosomal subunit protein uS15 (89 aa).

This sequence belongs to the universal ribosomal protein uS15 family. In terms of assembly, part of the 30S ribosomal subunit. Forms a bridge to the 50S subunit in the 70S ribosome, contacting the 23S rRNA.

In terms of biological role, one of the primary rRNA binding proteins, it binds directly to 16S rRNA where it helps nucleate assembly of the platform of the 30S subunit by binding and bridging several RNA helices of the 16S rRNA. Functionally, forms an intersubunit bridge (bridge B4) with the 23S rRNA of the 50S subunit in the ribosome. This chain is Small ribosomal subunit protein uS15, found in Granulibacter bethesdensis (strain ATCC BAA-1260 / CGDNIH1).